A 287-amino-acid polypeptide reads, in one-letter code: MLLKGTPVAERILEKLKQKISQSPTPPGLAVVLIGNDPASEVYVGMKVKKAMNLGMVSKAHRLPSDATLTDILKLIERLNNDPTIHGILVQIPLPKHLDSNVIIQAISPEKDVDGLHPVNMGKLLLGQLGGFSPCTPAAVIELLNYYDIPLQGRHVAVVGRSNIVGKPLAAMLMQKHPTTNATVTLLHSQSQNFTEILKTADIIVAAVGVPLFIQENMISPNAVIVDVGISRVATNNDKGYMLVGDVDFNNVVTKCKAITPVPGGVGPMTVAMLMKNTWESYQKSSS.

NADP(+) is bound by residues 160–162 (GRS), Ser-189, and Ile-230.

It belongs to the tetrahydrofolate dehydrogenase/cyclohydrolase family. In terms of assembly, homodimer.

The enzyme catalyses (6R)-5,10-methylene-5,6,7,8-tetrahydrofolate + NADP(+) = (6R)-5,10-methenyltetrahydrofolate + NADPH. It carries out the reaction (6R)-5,10-methenyltetrahydrofolate + H2O = (6R)-10-formyltetrahydrofolate + H(+). The protein operates within one-carbon metabolism; tetrahydrofolate interconversion. Functionally, catalyzes the oxidation of 5,10-methylenetetrahydrofolate to 5,10-methenyltetrahydrofolate and then the hydrolysis of 5,10-methenyltetrahydrofolate to 10-formyltetrahydrofolate. The polypeptide is Bifunctional protein FolD (Chlamydia felis (strain Fe/C-56) (Chlamydophila felis)).